Here is a 314-residue protein sequence, read N- to C-terminus: Serine hydrolase-like protein 2 (314 aa).

The 261-residue stretch at 33–293 (PPVLCLHGWL…GNHCVHMSEP (261 aa)) folds into the AB hydrolase-1 domain. Ser108 is a catalytic residue.

This sequence belongs to the AB hydrolase superfamily.

It localises to the cytoplasm. It is found in the perinuclear region. Its subcellular location is the peroxisome. Its function is as follows. Probable serine hydrolase. May be related to cell muscle hypertrophy. The sequence is that of Serine hydrolase-like protein 2 (SERHL2) from Homo sapiens (Human).